We begin with the raw amino-acid sequence, 468 residues long: Chromosomal replication initiator protein DnaA (468 aa).

The segment at M1 to S84 is domain I, interacts with DnaA modulators. Positions S84 to S131 are domain II. The tract at residues L112–N132 is disordered. Residues K114 to H129 are compositionally biased toward basic and acidic residues. The segment at N132 to A348 is domain III, AAA+ region. Residues G176, G178, K179, and T180 each contribute to the ATP site. A domain IV, binds dsDNA region spans residues N349–S468.

This sequence belongs to the DnaA family. Oligomerizes as a right-handed, spiral filament on DNA at oriC.

Its subcellular location is the cytoplasm. Its function is as follows. Plays an essential role in the initiation and regulation of chromosomal replication. ATP-DnaA binds to the origin of replication (oriC) to initiate formation of the DNA replication initiation complex once per cell cycle. Binds the DnaA box (a 9 base pair repeat at the origin) and separates the double-stranded (ds)DNA. Forms a right-handed helical filament on oriC DNA; dsDNA binds to the exterior of the filament while single-stranded (ss)DNA is stabiized in the filament's interior. The ATP-DnaA-oriC complex binds and stabilizes one strand of the AT-rich DNA unwinding element (DUE), permitting loading of DNA polymerase. After initiation quickly degrades to an ADP-DnaA complex that is not apt for DNA replication. Binds acidic phospholipids. The protein is Chromosomal replication initiator protein DnaA of Aliivibrio salmonicida (strain LFI1238) (Vibrio salmonicida (strain LFI1238)).